The following is a 132-amino-acid chain: Seminal vesicle protein SVP-2 (132 aa).

The signal sequence occupies residues 1–14 (HLALLLILENQASG). A compositionally biased stretch (basic and acidic residues) spans 33–81 (HKEEVEESESSRGQDFDKRRFWEKDDPTGEHVSVRHEHLEKSHIRFKED). Disordered regions lie at residues 33–104 (HKEE…LKRH) and 113–132 (VEDQALANGADPGKSNMQRV). A propeptide spanning residues 104–132 (HDAMEELVSVEDQALANGADPGKSNMQRV) is cleaved from the precursor.

To the SVP-1/-3/-4 precursor, particularly in regions where protein processing must occur.

The protein localises to the secreted. The polypeptide is Seminal vesicle protein SVP-2 (Cavia porcellus (Guinea pig)).